A 144-amino-acid chain; its full sequence is Globin-1 (144 aa).

The region spanning 1–141 is the Globin domain; sequence VSANDIKNVQ…ILHQMSSYFA (141 aa). His89 contacts heme b.

This sequence belongs to the globin family. Homodimer.

The polypeptide is Globin-1 (Phreagena soyoae (Deep-sea cold-seep clam)).